A 341-amino-acid chain; its full sequence is Geranylfarnesyl diphosphate synthase (341 aa).

Isopentenyl diphosphate is bound by residues K47, R50, and Q95. Mg(2+) contacts are provided by D102 and D106. R111 contacts an all-trans-polyprenyl diphosphate. R112 contacts isopentenyl diphosphate. An all-trans-polyprenyl diphosphate contacts are provided by K193, T194, and Q231.

The protein belongs to the FPP/GGPP synthase family. Homodimer. The cofactor is Mg(2+).

The protein localises to the cytoplasm. The catalysed reaction is isopentenyl diphosphate + (2E,6E,10E)-geranylgeranyl diphosphate = (2E,6E,10E,14E)-geranylfarnesyl diphosphate + diphosphate. In terms of biological role, probably involved in biosynthesis of the precursor for C25 (sesterterpanyl chain) moiety of C20-C25 diether (2-O-sesterterpanyl-3-O-phytanyl-sn-glycer) membrane lipid. Catalyzes the condensation of isopentenyl pyrophosphate with the allylic pyrophosphates to yield geranylfarnesyl diphosphate (GFPP). Geranylgeranyl diphosphate (GGPP) is the preferred substrate, but dimethylallyl diphosphate (DMAPP) and farnesyl diphosphate (FPP) can also be used as allylic substrate. The protein is Geranylfarnesyl diphosphate synthase (idsA3) of Natronomonas pharaonis (strain ATCC 35678 / DSM 2160 / CIP 103997 / JCM 8858 / NBRC 14720 / NCIMB 2260 / Gabara) (Halobacterium pharaonis).